The sequence spans 431 residues: tRNA(Ile)-lysidine synthase (431 aa).

19-24 (STGIDS) provides a ligand contact to ATP.

The protein belongs to the tRNA(Ile)-lysidine synthase family.

The protein resides in the cytoplasm. The enzyme catalyses cytidine(34) in tRNA(Ile2) + L-lysine + ATP = lysidine(34) in tRNA(Ile2) + AMP + diphosphate + H(+). Its function is as follows. Ligates lysine onto the cytidine present at position 34 of the AUA codon-specific tRNA(Ile) that contains the anticodon CAU, in an ATP-dependent manner. Cytidine is converted to lysidine, thus changing the amino acid specificity of the tRNA from methionine to isoleucine. This is tRNA(Ile)-lysidine synthase from Staphylococcus aureus (strain MW2).